Consider the following 304-residue polypeptide: GTPase Era (304 aa).

In terms of domain architecture, Era-type G spans 9–177 (HSGFVAIVGR…VTTLSQHMPE (169 aa)). The segment at 17–24 (GRPNVGKS) is G1. 17-24 (GRPNVGKS) provides a ligand contact to GTP. Residues 43 to 47 (QTTRN) form a G2 region. Residues 64–67 (DTPG) form a G3 region. GTP is bound by residues 64–68 (DTPGI) and 127–130 (NKID). The tract at residues 127–130 (NKID) is G4. Positions 156–158 (ISA) are G5. The KH type-2 domain maps to 208 to 285 (TRQEVPHSVA…YLELWVKVSE (78 aa)).

It belongs to the TRAFAC class TrmE-Era-EngA-EngB-Septin-like GTPase superfamily. Era GTPase family. As to quaternary structure, monomer.

The protein resides in the cytoplasm. It localises to the cell membrane. Functionally, an essential GTPase that binds both GDP and GTP, with rapid nucleotide exchange. Plays a role in 16S rRNA processing and 30S ribosomal subunit biogenesis and possibly also in cell cycle regulation and energy metabolism. This Pediococcus pentosaceus (strain ATCC 25745 / CCUG 21536 / LMG 10740 / 183-1w) protein is GTPase Era.